Consider the following 250-residue polypeptide: 3-deoxy-manno-octulosonate cytidylyltransferase (250 aa).

It belongs to the KdsB family.

The protein resides in the cytoplasm. It carries out the reaction 3-deoxy-alpha-D-manno-oct-2-ulosonate + CTP = CMP-3-deoxy-beta-D-manno-octulosonate + diphosphate. Its pathway is nucleotide-sugar biosynthesis; CMP-3-deoxy-D-manno-octulosonate biosynthesis; CMP-3-deoxy-D-manno-octulosonate from 3-deoxy-D-manno-octulosonate and CTP: step 1/1. It participates in bacterial outer membrane biogenesis; lipopolysaccharide biosynthesis. In terms of biological role, activates KDO (a required 8-carbon sugar) for incorporation into bacterial lipopolysaccharide in Gram-negative bacteria. The protein is 3-deoxy-manno-octulosonate cytidylyltransferase of Francisella philomiragia subsp. philomiragia (strain ATCC 25017 / CCUG 19701 / FSC 153 / O#319-036).